The following is a 335-amino-acid chain: MTDNFTCNKTDGDNTDFRYFIYAVTYTVILVPGLIGNILALWVFYGYMKETKRAVVFMINLAIADLLQILSLPLRIFYYLNHDWPFGPGLCMFCFYLKYVNMYASIYFLVCISVRRFWFLMYPFRFNDCKQKYDLYISIIGWLIICLACLLFPLLRTNDDTPGNRTKCFVDLPIRNVNLAQSVAMITIGEVVGFVTPLMIVLYCTWKTALSLQNKYPISQHLGEKKKALKMILTCAGVFLVCFVPYHFSFPLDFLVKSNEIKSCFARRVILIFHSVALCLASLNSCLDPVIYYFTTNEFRRRLSRQDLPDNIQLHTKSYKIASNHATSTVAAELC.

Topologically, residues 1-27 (MTDNFTCNKTDGDNTDFRYFIYAVTYT) are extracellular. N-linked (GlcNAc...) asparagine glycosylation is found at asparagine 4 and asparagine 8. Residues 28–48 (VILVPGLIGNILALWVFYGYM) form a helical membrane-spanning segment. Residues 49-53 (KETKR) are Cytoplasmic-facing. Residues 54 to 74 (AVVFMINLAIADLLQILSLPL) form a helical membrane-spanning segment. At 75–91 (RIFYYLNHDWPFGPGLC) the chain is on the extracellular side. A disulfide bond links cysteine 91 and cysteine 168. A helical membrane pass occupies residues 92 to 112 (MFCFYLKYVNMYASIYFLVCI). The Cytoplasmic portion of the chain corresponds to 113–134 (SVRRFWFLMYPFRFNDCKQKYD). The helical transmembrane segment at 135–155 (LYISIIGWLIICLACLLFPLL) threads the bilayer. Residues 156-182 (RTNDDTPGNRTKCFVDLPIRNVNLAQS) lie on the Extracellular side of the membrane. N-linked (GlcNAc...) asparagine glycosylation occurs at asparagine 164. Residues 183 to 203 (VAMITIGEVVGFVTPLMIVLY) traverse the membrane as a helical segment. The Cytoplasmic portion of the chain corresponds to 204-231 (CTWKTALSLQNKYPISQHLGEKKKALKM). Residues 232–252 (ILTCAGVFLVCFVPYHFSFPL) form a helical membrane-spanning segment. The Extracellular segment spans residues 253-268 (DFLVKSNEIKSCFARR). Residues 269–289 (VILIFHSVALCLASLNSCLDP) form a helical membrane-spanning segment. The Cytoplasmic portion of the chain corresponds to 290–335 (VIYYFTTNEFRRRLSRQDLPDNIQLHTKSYKIASNHATSTVAAELC).

The protein belongs to the G-protein coupled receptor 1 family. Interacts with GNA13. Interacts with CCL21. As to expression, expressed in spleen and, at low levels, in brain. Highly expressed in developing and mature regulatory T-cells.

It is found in the cell membrane. G-protein-coupled receptor of lysophosphatidylserine (LysoPS) that plays different roles in immune response. Plays a negative role in regulatory T-cell accumulation and homeostasis. Under inflammatory conditions where LysoPS production increases, contributes to the down-regulation of regulatory T-cell activity to favor effector response. Mediates the suppression of IL-2 production in activated T-lymphocytes leading to inhibition of growth, proliferation and differentiation of T-cells. Mechanistically, acts via G(s)-containing heterotrimeric G proteins to trigger elevated cyclic AMP levels and protein kinase A/PKA activity, which may in turn act to antagonize proximal TCR signaling. Plays an important role in the initial period of sepsis through the regulation of macrophage polarization and pro- and anti-inflammatory cytokine secretions. Upon testosterone treatment, acts as a receptor for CCL21 and subsequently triggers through G(q)-alpha and G(12)/G(13) proteins a calcium flux leading to chemotactic effects on activated B-cells. Signals via GNA13 and PKA to promote CD86 up-regulation by follicular B-cells. In Mus musculus (Mouse), this protein is Probable G-protein coupled receptor 174 (Gpr174).